A 178-amino-acid polypeptide reads, in one-letter code: Protein 105R (178 aa).

A signal peptide spans 1–18 (MYFLFFFLLFLFPVGVKG).

The protein is Protein 105R of Pantherophis guttatus (Corn snake).